The following is a 273-amino-acid chain: Embryonic polyadenylate-binding protein 2 (273 aa).

Residues 22-57 form a disordered region; the sequence is SSDPEAQGWGAWGRTEKTSLVPRAGSRAGSDKEAEE. An RRM domain is found at 143-220; sequence RSVFVGNVDY…RVIKVLPKRT (78 aa).

It localises to the cytoplasm. Binds the poly(A) tail of mRNA. The polypeptide is Embryonic polyadenylate-binding protein 2 (Pabpn1l) (Mus musculus (Mouse)).